The following is a 205-amino-acid chain: MSAIAPGMILFAYLCGSISSAILVCRLCGLPDPRTSGSGNPGATNVLRMGGKGAALAVLIFDVLKGMLPVWGAYELGVSPFWLGLIAIAACLGHIWPIFFGFKGGKGVATAFGAIAPIGWDLTGVMAGTWLLTVLLSGYSSLGAIVSALIAPFYVWWFKPQFTFPVSMLSCLILLRHHDNIQRLWRRQETKIWTKLKRKREKDPE.

At 1–3 (MSA) the chain is on the periplasmic side. A helical transmembrane segment spans residues 4 to 24 (IAPGMILFAYLCGSISSAILV). At 25-52 (CRLCGLPDPRTSGSGNPGATNVLRMGGK) the chain is on the cytoplasmic side. The chain crosses the membrane as a helical span at residues 53–73 (GAALAVLIFDVLKGMLPVWGA). At 74 to 80 (YELGVSP) the chain is on the periplasmic side. A helical membrane pass occupies residues 81–101 (FWLGLIAIAACLGHIWPIFFG). Over 102–111 (FKGGKGVATA) the chain is Cytoplasmic. A helical membrane pass occupies residues 112 to 132 (FGAIAPIGWDLTGVMAGTWLL). The Periplasmic segment spans residues 133–137 (TVLLS). A helical membrane pass occupies residues 138 to 158 (GYSSLGAIVSALIAPFYVWWF). Topologically, residues 159-205 (KPQFTFPVSMLSCLILLRHHDNIQRLWRRQETKIWTKLKRKREKDPE) are cytoplasmic.

This sequence belongs to the PlsY family. In terms of assembly, probably interacts with PlsX.

It is found in the cell inner membrane. The catalysed reaction is sn-glycerol 3-phosphate + an acyl-CoA = a 1-acyl-sn-glycero-3-phosphate + CoA. The enzyme catalyses a fatty acyl-[ACP] + sn-glycerol 3-phosphate = a 1-acyl-sn-glycero-3-phosphate + holo-[ACP]. Its pathway is lipid metabolism; phospholipid metabolism. Functionally, catalyzes the transfer of an acyl group from acyl-ACP to glycerol-3-phosphate (G3P) to form lysophosphatidic acid (LPA). This enzyme can also utilize acyl-CoA as fatty acyl donor, but not acyl-PO(4). The protein is Glycerol-3-phosphate acyltransferase of Escherichia fergusonii (strain ATCC 35469 / DSM 13698 / CCUG 18766 / IAM 14443 / JCM 21226 / LMG 7866 / NBRC 102419 / NCTC 12128 / CDC 0568-73).